The chain runs to 780 residues: Nuclear cap-binding protein subunit 1 (780 aa).

Positions 1 to 25 (MSSYRGSTRPRKRTREGENYGFRPH) are disordered. Residue Ser29 is modified to Phosphoserine. An MIF4G domain is found at 34–249 (AARIKKDITF…KQLILSREND (216 aa)). The segment at 738 to 780 (ANEPVQENTSEEQEDTKMQPVDAVDEQPSENNQTAADATNEEK) is disordered.

It belongs to the NCBP1 family. In terms of assembly, component of the nuclear cap-binding complex (CBC), a heterodimer composed of cbc1 and cbc2 that interacts with capped RNAs.

The protein resides in the cytoplasm. It is found in the perinuclear region. Its subcellular location is the nucleus. Functionally, component of the CBC complex, which binds cotranscriptionally to the 5'-cap of pre-mRNAs and is involved in maturation, export and degradation of nuclear mRNAs. This Schizosaccharomyces pombe (strain 972 / ATCC 24843) (Fission yeast) protein is Nuclear cap-binding protein subunit 1 (cbc1).